A 571-amino-acid polypeptide reads, in one-letter code: Potassium-transporting ATPase potassium-binding subunit (571 aa).

The next 11 helical transmembrane spans lie at 5 to 25 (GWIQIALYGAIVLALVKPLGS), 64 to 84 (LAYTGAVILFHVLGFAVLYAI), 136 to 156 (GLTHQNFLSAATGIAVAVALI), 179 to 199 (LYVLLPICVPYTLFLVWQGIP), 254 to 274 (LSNLVQMVSIFAIGAALTNVF), 285 to 305 (WAILGAMGILFLAGVLVTYWA), 330 to 350 (FGIAASALFAVITTAASCGAV), 357 to 376 (FTALGGLIPLLNMQLGEIII), 421 to 441 (MLGILCLPLMMLGFTALATVV), 488 to 508 (LAIGMLVGRFFVKIPVLAIAG), and 527 to 547 (GGLFVGLLVGVILIIGGLTFF).

The protein belongs to the KdpA family. The system is composed of three essential subunits: KdpA, KdpB and KdpC.

The protein localises to the cell inner membrane. Its function is as follows. Part of the high-affinity ATP-driven potassium transport (or Kdp) system, which catalyzes the hydrolysis of ATP coupled with the electrogenic transport of potassium into the cytoplasm. This subunit binds the periplasmic potassium ions and delivers the ions to the membrane domain of KdpB through an intramembrane tunnel. This Methylobacterium radiotolerans (strain ATCC 27329 / DSM 1819 / JCM 2831 / NBRC 15690 / NCIMB 10815 / 0-1) protein is Potassium-transporting ATPase potassium-binding subunit.